The chain runs to 404 residues: Pectate lyase E (404 aa).

Positions 1-41 (MNNSRMSSVSTQKTTGRSALGTKSALAAIIATTMMVSVASA) are cleaved as a signal peptide. Residues D182 and D225 each coordinate Ca(2+). The active site involves R278.

The protein belongs to the polysaccharide lyase 1 family. PLBC subfamily. Requires Ca(2+) as cofactor.

The protein resides in the secreted. It catalyses the reaction Eliminative cleavage of (1-&gt;4)-alpha-D-galacturonan to give oligosaccharides with 4-deoxy-alpha-D-galact-4-enuronosyl groups at their non-reducing ends.. It functions in the pathway glycan metabolism; pectin degradation; 2-dehydro-3-deoxy-D-gluconate from pectin: step 2/5. Involved in maceration and soft-rotting of plant tissue. Pectate lyases have been implicated as pathogenicity factors which induce maceration or rotting of plant tissue. PelE is sufficient to induce these effects under laboratory conditions. The protein is Pectate lyase E (pelE) of Dickeya dadantii (strain 3937) (Erwinia chrysanthemi (strain 3937)).